Consider the following 340-residue polypeptide: Guanine nucleotide-binding protein G(I)/G(S)/G(T) subunit beta-1 (340 aa).

An N-acetylserine modification is found at Ser2. The residue at position 2 (Ser2) is a Phosphoserine. WD repeat units lie at residues 46–94 (RTRR…HAIP), 95–140 (LRSS…RELA), 141–181 (GHTG…TTFT), 182–223 (GHTG…QTFT), 224–267 (GHES…YSHD), 268–309 (NIIC…GVLA), and 310–340 (GHDNRVSCLGVTDDGMAVATGSWDSFLKIWN). A Phosphohistidine modification is found at His266.

It belongs to the WD repeat G protein beta family. In terms of assembly, g proteins are composed of 3 units, alpha, beta and gamma. The heterodimer formed by GNB1 and GNG2 interacts with ARHGEF5. The heterodimer formed by GNB1 and GNG2 interacts with GRK2. Forms a complex with GNAO1 and GNG3. Interacts with ARHGEF18 and RASD2. Forms complexes with TAS2R14 and G-proteins; these complexes play a role in the perception of bitterness. Component of the TAS2R14-GNAI1 complex, consisting of TAS2R14, GNAI1, GNB1 and GNG2. Component of the TAS2R14-GNAT3 complex, consisting of TAS2R14, GNAT3, GNB1 and GNG2. Component of the TAS2R14-GNAS2 complex, consisting of TAS2R14, GNAS2, GNB1 and GNG2. Phosphorylation at His-266 by NDKB contributes to G protein activation by increasing the high energetic phosphate transfer onto GDP.

In terms of biological role, guanine nucleotide-binding proteins (G proteins) are involved as a modulator or transducer in various transmembrane signaling systems. The beta and gamma chains are required for the GTPase activity, for replacement of GDP by GTP, and for G protein-effector interaction. This Cricetulus griseus (Chinese hamster) protein is Guanine nucleotide-binding protein G(I)/G(S)/G(T) subunit beta-1 (GNB1).